A 249-amino-acid chain; its full sequence is ATP synthase subunit a, chloroplastic (249 aa).

Transmembrane regions (helical) follow at residues 38 to 58 (GQVL…SVIA), 97 to 117 (VPFV…GALI), 136 to 156 (INTT…AGLS), 201 to 221 (LVVA…MMLL), and 222 to 242 (GLFT…AYIG).

This sequence belongs to the ATPase A chain family. As to quaternary structure, F-type ATPases have 2 components, CF(1) - the catalytic core - and CF(0) - the membrane proton channel. CF(1) has five subunits: alpha(3), beta(3), gamma(1), delta(1), epsilon(1). CF(0) has four main subunits: a, b, b' and c.

The protein localises to the plastid. Its subcellular location is the chloroplast thylakoid membrane. Functionally, key component of the proton channel; it plays a direct role in the translocation of protons across the membrane. The sequence is that of ATP synthase subunit a, chloroplastic from Chlorokybus atmophyticus (Soil alga).